Reading from the N-terminus, the 607-residue chain is UvrABC system protein C (607 aa).

One can recognise a GIY-YIG domain in the interval 11–89; sequence CKPGVYRFED…IKEFAPPCNV (79 aa). One can recognise a UVR domain in the interval 201–236; it reads SSLLESLKKKMLKASKNKEYEEAAILRDKIQAAQTV.

The protein belongs to the UvrC family. In terms of assembly, interacts with UvrB in an incision complex.

It localises to the cytoplasm. The UvrABC repair system catalyzes the recognition and processing of DNA lesions. UvrC both incises the 5' and 3' sides of the lesion. The N-terminal half is responsible for the 3' incision and the C-terminal half is responsible for the 5' incision. The chain is UvrABC system protein C from Tropheryma whipplei (strain Twist) (Whipple's bacillus).